A 388-amino-acid chain; its full sequence is P2X purinoceptor 4 (388 aa).

The Cytoplasmic portion of the chain corresponds to 1 to 33 (MAGCCSVLGSFLFEYDTPRIVLIRSRKVGLMNR). The chain crosses the membrane as a helical span at residues 34–54 (VVQLLILAYVIGWVFVWEKGY). The Extracellular segment spans residues 55-338 (QETDSVVSSV…KFDIIPTMIN (284 aa)). ATP is bound by residues lysine 67 and lysine 69. CTP contacts are provided by lysine 67 and lysine 69. Residues asparagine 75, asparagine 110, asparagine 131, asparagine 153, and asparagine 184 are each glycosylated (N-linked (GlcNAc...) asparagine). 3 disulfide bridges follow: cysteine 116-cysteine 165, cysteine 126-cysteine 149, and cysteine 132-cysteine 159. ATP-binding residues include threonine 186 and leucine 188. Threonine 186 lines the CTP pocket. N-linked (GlcNAc...) asparagine glycosylation is found at asparagine 199 and asparagine 208. 2 disulfides stabilise this stretch: cysteine 217/cysteine 227 and cysteine 261/cysteine 270. ATP contacts are provided by asparagine 293, arginine 295, and lysine 313. CTP contacts are provided by asparagine 293, arginine 295, and lysine 313. Residues 339–359 (VGSGLALLGVATVLCDVIVLY) traverse the membrane as a helical segment. The Cytoplasmic portion of the chain corresponds to 360–388 (CMKKRYYYRDKKYKYVEDYEQGLSGEMNQ).

It belongs to the P2X receptor family. Functional P2RXs are organized as homomeric and heteromeric trimers. Functional P2XRs are organized as homomeric and heteromeric trimers. Forms heterotrimer with P2RX1. Interacts with P2RX7 (via C-terminus); this interaction is functional only in the presence of ATP. Forms heterotrimer with P2RX4; functional differences between homomeric P2RX4 and P2RX4/6 heterotrimer are minor. Interacts with AP1M2.

Its subcellular location is the cell membrane. The protein localises to the lysosome membrane. It catalyses the reaction K(+)(in) = K(+)(out). The catalysed reaction is Na(+)(in) = Na(+)(out). The enzyme catalyses Ca(2+)(in) = Ca(2+)(out). Activated by ATP. pH-dependent and inhibited by acidic pH. Functionally, ATP-gated nonselective transmembrane cation channel permeable to potassium, sodium and calcium. CTP, but not GTP or UTP, functions as a weak affinity agonist for P2RX4. Activated by extracellularly released ATP, it plays multiple role in immunity and central nervous system physiology. Plays a key role in initial steps of T-cell activation and Ca(2+) microdomain formation. Also participates in basal T-cell activity without TCR/CD3 stimulation. Promotes the differentiation and activation of Th17 cells via expression of retinoic acid-related orphan receptor C/RORC. Upon activation, drives microglia motility via the PI3K/Akt pathway. Could also function as an ATP-gated cation channel of lysosomal membranes. The chain is P2X purinoceptor 4 (P2rx4) from Mus musculus (Mouse).